We begin with the raw amino-acid sequence, 684 residues long: Cleavage and polyadenylation specificity factor 73 (684 aa).

His77, His79, Asp81, His82, His164, and Asp185 together coordinate Zn(2+). His402 functions as the Proton donor in the catalytic mechanism. Zn(2+) is bound at residue His424.

It belongs to the metallo-beta-lactamase superfamily. RNA-metabolizing metallo-beta-lactamase-like family. CPSF3 subfamily. Component of the cleavage and polyadenylation specificity factor (CPSF) complex, composed of at least Clp, Cpsf73, Cpsf100 and Cpsf160. Interacts with Sym and Cpsf100 forming a core cleavage factor required for both polyadenylated and histone mRNA processing. Interacts with Slbp and Lsm11. The cofactor is Zn(2+).

The protein localises to the nucleus. Component of the cleavage and polyadenylation specificity factor (CPSF) complex that plays a key role in pre-mRNA 3'-end formation, recognizing the AAUAAA signal sequence and interacting with poly(A) polymerase and other factors to bring about cleavage and poly(A) addition. Has endonuclease activity and functions as an mRNA 3'-end-processing endonuclease. Required for the cotranscriptional processing of 3'-ends of polyadenylated and histone pre-mRNA. The chain is Cleavage and polyadenylation specificity factor 73 (Cpsf73) from Drosophila melanogaster (Fruit fly).